The chain runs to 292 residues: Alpha-soluble NSF attachment protein (292 aa).

Belongs to the SNAP family.

The protein resides in the cytoplasmic vesicle. It is found in the membrane. In terms of biological role, required for vesicular transport between the endoplasmic reticulum and the Golgi apparatus. Also between the endosome and phagosome. The polypeptide is Alpha-soluble NSF attachment protein (Drosophila melanogaster (Fruit fly)).